The chain runs to 856 residues: Envelope glycoprotein gp160 (856 aa).

The N-terminal stretch at Met-1–Glu-31 is a signal peptide. At Gln-32 to Ile-684 the chain is on the extracellular side. Cys-53 and Cys-73 are disulfide-bonded. N-linked (GlcNAc...) asparagine; by host glycosylation is found at Asn-87, Asn-134, Asn-140, Asn-151, Asn-155, Asn-183, Asn-197, Asn-234, Asn-241, Asn-262, Asn-276, Asn-289, and Asn-295. Intrachain disulfides connect Cys-118-Cys-205, Cys-125-Cys-196, Cys-130-Cys-152, Cys-218-Cys-247, and Cys-228-Cys-239. A V1 region spans residues Cys-130–Asn-151. The V2 stretch occupies residues Cys-152–Cys-196. A V3 region spans residues Cys-296–His-329. A disulfide bridge links Cys-296 with Cys-330. Residues Asn-331, Asn-338, Asn-354, and Asn-360 are each glycosylated (N-linked (GlcNAc...) asparagine; by host). The segment at Ser-362–His-372 is CD4-binding loop. Cystine bridges form between Cys-376-Cys-444 and Cys-383-Cys-417. Positions Cys-383–Cys-417 are V4. 5 N-linked (GlcNAc...) asparagine; by host glycosylation sites follow: Asn-390, Asn-394, Asn-404, Asn-447, and Asn-459. V5 regions lie at residues Ser-460–Gly-470 and Ser-462–Gly-470. A fusion peptide region spans residues Ala-511–Ala-532. Residues Lys-574 to Leu-592 are immunosuppression. A disulfide bridge links Cys-598 with Cys-604. Residues Asn-611, Asn-616, Asn-625, and Asn-637 are each glycosylated (N-linked (GlcNAc...) asparagine; by host). A coiled-coil region spans residues Arg-633 to Ala-667. The MPER; binding to GalCer stretch occupies residues Glu-662–Lys-683. Residues Phe-685–Val-705 traverse the membrane as a helical segment. Topologically, residues Asn-706–Leu-856 are cytoplasmic. The short motif at Tyr-712 to Leu-715 is the YXXL motif; contains endocytosis signal element. The tract at residues Ser-716–Arg-742 is disordered. 2 S-palmitoyl cysteine; by host lipidation sites follow: Cys-764 and Cys-837. The Di-leucine internalization motif motif lies at Leu-855–Leu-856.

The protein belongs to the HIV-1 env protein family. As to quaternary structure, the mature envelope protein (Env) consists of a homotrimer of non-covalently associated gp120-gp41 heterodimers. The resulting complex protrudes from the virus surface as a spike. There seems to be as few as 10 spikes on the average virion. Interacts with host CD4, CCR5 and CXCR4. Gp120 also interacts with the C-type lectins CD209/DC-SIGN and CLEC4M/DC-SIGNR (collectively referred to as DC-SIGN(R)). Gp120 and gp41 interact with GalCer. Gp120 interacts with host ITGA4/ITGB7 complex; on CD4+ T-cells, this interaction results in rapid activation of integrin ITGAL/LFA-1, which facilitates efficient cell-to-cell spreading of HIV-1. Gp120 interacts with cell-associated heparan sulfate; this interaction increases virus infectivity on permissive cells and may be involved in infection of CD4- cells. The mature envelope protein (Env) consists of a homotrimer of non-covalently associated gp120-gp41 heterodimers. The resulting complex protrudes from the virus surface as a spike. There seems to be as few as 10 spikes on the average virion. Post-translationally, highly glycosylated by host. The high number of glycan on the protein is reffered to as 'glycan shield' because it contributes to hide protein sequence from adaptive immune system. Palmitoylation of the transmembrane protein and of Env polyprotein (prior to its proteolytic cleavage) is essential for their association with host cell membrane lipid rafts. Palmitoylation is therefore required for envelope trafficking to classical lipid rafts, but not for viral replication. In terms of processing, specific enzymatic cleavages in vivo yield mature proteins. Envelope glycoproteins are synthesized as an inactive precursor that is heavily N-glycosylated and processed likely by host cell furin in the Golgi to yield the mature SU and TM proteins. The cleavage site between SU and TM requires the minimal sequence [KR]-X-[KR]-R. About 2 of the 9 disulfide bonds of gp41 are reduced by P4HB/PDI, following binding to CD4 receptor.

It is found in the virion membrane. Its subcellular location is the host cell membrane. The protein resides in the host endosome membrane. Oligomerizes in the host endoplasmic reticulum into predominantly trimers. In a second time, gp160 transits in the host Golgi, where glycosylation is completed. The precursor is then proteolytically cleaved in the trans-Golgi and thereby activated by cellular furin or furin-like proteases to produce gp120 and gp41. Functionally, attaches the virus to the host lymphoid cell by binding to the primary receptor CD4. This interaction induces a structural rearrangement creating a high affinity binding site for a chemokine coreceptor like CXCR4 and/or CCR5. Acts as a ligand for CD209/DC-SIGN and CLEC4M/DC-SIGNR, which are respectively found on dendritic cells (DCs), and on endothelial cells of liver sinusoids and lymph node sinuses. These interactions allow capture of viral particles at mucosal surfaces by these cells and subsequent transmission to permissive cells. HIV subverts the migration properties of dendritic cells to gain access to CD4+ T-cells in lymph nodes. Virus transmission to permissive T-cells occurs either in trans (without DCs infection, through viral capture and transmission), or in cis (following DCs productive infection, through the usual CD4-gp120 interaction), thereby inducing a robust infection. In trans infection, bound virions remain infectious over days and it is proposed that they are not degraded, but protected in non-lysosomal acidic organelles within the DCs close to the cell membrane thus contributing to the viral infectious potential during DCs' migration from the periphery to the lymphoid tissues. On arrival at lymphoid tissues, intact virions recycle back to DCs' cell surface allowing virus transmission to CD4+ T-cells. Its function is as follows. Acts as a class I viral fusion protein. Under the current model, the protein has at least 3 conformational states: pre-fusion native state, pre-hairpin intermediate state, and post-fusion hairpin state. During fusion of viral and target intracellular membranes, the coiled coil regions (heptad repeats) assume a trimer-of-hairpins structure, positioning the fusion peptide in close proximity to the C-terminal region of the ectodomain. The formation of this structure appears to drive apposition and subsequent fusion of viral and target cell membranes. Complete fusion occurs in host cell endosomes and is dynamin-dependent, however some lipid transfer might occur at the plasma membrane. The virus undergoes clathrin-dependent internalization long before endosomal fusion, thus minimizing the surface exposure of conserved viral epitopes during fusion and reducing the efficacy of inhibitors targeting these epitopes. Membranes fusion leads to delivery of the nucleocapsid into the cytoplasm. This Homo sapiens (Human) protein is Envelope glycoprotein gp160.